Consider the following 130-residue polypeptide: Small ribosomal subunit protein uS9 (130 aa).

It belongs to the universal ribosomal protein uS9 family.

This Blochmanniella floridana protein is Small ribosomal subunit protein uS9.